A 200-amino-acid chain; its full sequence is Glycosyl hydrolase family 19 domain-containing protein HI_1415 (200 aa).

The protein belongs to the glycosyl hydrolase 19 family.

The chain is Glycosyl hydrolase family 19 domain-containing protein HI_1415 from Haemophilus influenzae (strain ATCC 51907 / DSM 11121 / KW20 / Rd).